The sequence spans 267 residues: Putative phosphoenolpyruvate synthase regulatory protein (267 aa).

147 to 154 (GVSRSGKT) is a binding site for ADP.

The protein belongs to the pyruvate, phosphate/water dikinase regulatory protein family. PSRP subfamily.

It catalyses the reaction [pyruvate, water dikinase] + ADP = [pyruvate, water dikinase]-phosphate + AMP + H(+). The enzyme catalyses [pyruvate, water dikinase]-phosphate + phosphate + H(+) = [pyruvate, water dikinase] + diphosphate. Functionally, bifunctional serine/threonine kinase and phosphorylase involved in the regulation of the phosphoenolpyruvate synthase (PEPS) by catalyzing its phosphorylation/dephosphorylation. This is Putative phosphoenolpyruvate synthase regulatory protein from Cupriavidus necator (strain ATCC 17699 / DSM 428 / KCTC 22496 / NCIMB 10442 / H16 / Stanier 337) (Ralstonia eutropha).